Reading from the N-terminus, the 147-residue chain is UPF0306 protein YhbP (147 aa).

It belongs to the UPF0306 family.

This is UPF0306 protein YhbP from Escherichia coli O6:K15:H31 (strain 536 / UPEC).